We begin with the raw amino-acid sequence, 548 residues long: Chaperonin GroEL (548 aa).

ATP is bound by residues 29–32, lysine 50, 86–90, glycine 414, 478–480, and aspartate 494; these read TLGP, DGTTT, and NAA.

The protein belongs to the chaperonin (HSP60) family. Forms a cylinder of 14 subunits composed of two heptameric rings stacked back-to-back. Interacts with the co-chaperonin GroES.

Its subcellular location is the cytoplasm. It carries out the reaction ATP + H2O + a folded polypeptide = ADP + phosphate + an unfolded polypeptide.. Functionally, together with its co-chaperonin GroES, plays an essential role in assisting protein folding. The GroEL-GroES system forms a nano-cage that allows encapsulation of the non-native substrate proteins and provides a physical environment optimized to promote and accelerate protein folding. The protein is Chaperonin GroEL of Alcanivorax borkumensis (strain ATCC 700651 / DSM 11573 / NCIMB 13689 / SK2).